The following is a 393-amino-acid chain: MIKKEAPLIALVAGEISGDILGAGLINALKLHYPNARFIGVAGPRMIQAGCETLFDMEELAVMGLAEVVKHLPRLLKRRKQVIETMLAEKPDIFIGIDAPDFNLTVEEKLKASGIKTIHYVSPSVWAWRQNRVQKIARATNLVLAFLPFEKAFYDRFNVPCRFIGHTMADAIALKPNRSEACATLNLDETQRYLAILVGSRASEVRFLAEPFLKAAKILKQQYPDLQFLVPLVNDKRIAQFEQIKAQVAPELSVHILKGNARQAMIAAEASLLASGTAALEGMLCKSPMVVGYKMKAMTYWLAKRLVKTKYISLPNLLADEMLVPELIQDECNPENLAWYLGNYLADDADHRKQRNELKQRFTELHKLIQCDADAQAAQAVVDVLEANTSDQN.

It belongs to the LpxB family.

It carries out the reaction a lipid X + a UDP-2-N,3-O-bis[(3R)-3-hydroxyacyl]-alpha-D-glucosamine = a lipid A disaccharide + UDP + H(+). The protein operates within bacterial outer membrane biogenesis; LPS lipid A biosynthesis. Condensation of UDP-2,3-diacylglucosamine and 2,3-diacylglucosamine-1-phosphate to form lipid A disaccharide, a precursor of lipid A, a phosphorylated glycolipid that anchors the lipopolysaccharide to the outer membrane of the cell. In Actinobacillus pleuropneumoniae serotype 7 (strain AP76), this protein is Lipid-A-disaccharide synthase.